A 172-amino-acid polypeptide reads, in one-letter code: 3-hydroxydecanoyl-[acyl-carrier-protein] dehydratase (172 aa).

His-71 is an active-site residue.

The protein belongs to the thioester dehydratase family. FabA subfamily. In terms of assembly, homodimer.

It localises to the cytoplasm. It catalyses the reaction a (3R)-hydroxyacyl-[ACP] = a (2E)-enoyl-[ACP] + H2O. The enzyme catalyses (3R)-hydroxydecanoyl-[ACP] = (2E)-decenoyl-[ACP] + H2O. It carries out the reaction (2E)-decenoyl-[ACP] = (3Z)-decenoyl-[ACP]. Its pathway is lipid metabolism; fatty acid biosynthesis. Necessary for the introduction of cis unsaturation into fatty acids. Catalyzes the dehydration of (3R)-3-hydroxydecanoyl-ACP to E-(2)-decenoyl-ACP and then its isomerization to Z-(3)-decenoyl-ACP. Can catalyze the dehydratase reaction for beta-hydroxyacyl-ACPs with saturated chain lengths up to 16:0, being most active on intermediate chain length. This chain is 3-hydroxydecanoyl-[acyl-carrier-protein] dehydratase, found in Pseudoalteromonas atlantica (strain T6c / ATCC BAA-1087).